Reading from the N-terminus, the 368-residue chain is Quinolinate synthase (368 aa).

Residues H46 and S63 each coordinate iminosuccinate. C110 is a binding site for [4Fe-4S] cluster. Iminosuccinate-binding positions include 141 to 143 (YVN) and S162. C230 contributes to the [4Fe-4S] cluster binding site. Residues 256–258 (HPE) and T273 contribute to the iminosuccinate site. C320 is a binding site for [4Fe-4S] cluster.

This sequence belongs to the quinolinate synthase family. Type 3 subfamily. [4Fe-4S] cluster is required as a cofactor.

The protein localises to the cytoplasm. It catalyses the reaction iminosuccinate + dihydroxyacetone phosphate = quinolinate + phosphate + 2 H2O + H(+). It functions in the pathway cofactor biosynthesis; NAD(+) biosynthesis; quinolinate from iminoaspartate: step 1/1. Catalyzes the condensation of iminoaspartate with dihydroxyacetone phosphate to form quinolinate. The protein is Quinolinate synthase of Bacillus mycoides (strain KBAB4) (Bacillus weihenstephanensis).